A 637-amino-acid polypeptide reads, in one-letter code: 1-deoxy-D-xylulose-5-phosphate synthase (637 aa).

Thiamine diphosphate is bound by residues His71 and 112–114; that span reads SHA. Residue Asp144 participates in Mg(2+) binding. Residues 145 to 146, Asn173, Tyr284, and Glu365 each bind thiamine diphosphate; that span reads GA. Asn173 is a binding site for Mg(2+).

It belongs to the transketolase family. DXPS subfamily. Homodimer. Mg(2+) serves as cofactor. Requires thiamine diphosphate as cofactor.

The enzyme catalyses D-glyceraldehyde 3-phosphate + pyruvate + H(+) = 1-deoxy-D-xylulose 5-phosphate + CO2. Its pathway is metabolic intermediate biosynthesis; 1-deoxy-D-xylulose 5-phosphate biosynthesis; 1-deoxy-D-xylulose 5-phosphate from D-glyceraldehyde 3-phosphate and pyruvate: step 1/1. Catalyzes the acyloin condensation reaction between C atoms 2 and 3 of pyruvate and glyceraldehyde 3-phosphate to yield 1-deoxy-D-xylulose-5-phosphate (DXP). The polypeptide is 1-deoxy-D-xylulose-5-phosphate synthase (Mycobacterium ulcerans (strain Agy99)).